The following is a 276-amino-acid chain: Large ribosomal subunit protein uL2 (276 aa).

2 disordered regions span residues 36–55 and 219–276; these read PLPRKAGRNNQGKLTVRHRG and TVRG…GRKK. Over residues 255–276 the composition is skewed to basic residues; sequence LGKKTRKKKNRSNKLIVRGRKK.

The protein belongs to the universal ribosomal protein uL2 family. As to quaternary structure, part of the 50S ribosomal subunit. Forms a bridge to the 30S subunit in the 70S ribosome.

One of the primary rRNA binding proteins. Required for association of the 30S and 50S subunits to form the 70S ribosome, for tRNA binding and peptide bond formation. It has been suggested to have peptidyltransferase activity; this is somewhat controversial. Makes several contacts with the 16S rRNA in the 70S ribosome. The chain is Large ribosomal subunit protein uL2 from Macrococcus caseolyticus (strain JCSC5402) (Macrococcoides caseolyticum).